The chain runs to 509 residues: Ribonuclease Y (509 aa).

The chain crosses the membrane as a helical span at residues 5-25 (IIILLSVFCGIFFICFIICSS). The KH domain occupies 199–259 (TTNIVKLPSD…IRREIATRTL (61 aa)). The HD domain maps to 325–418 (VLAHSIEVAK…VAIADSISAS (94 aa)).

This sequence belongs to the RNase Y family.

Its subcellular location is the cell membrane. In terms of biological role, endoribonuclease that initiates mRNA decay. The polypeptide is Ribonuclease Y (Mycoplasma capricolum subsp. capricolum (strain California kid / ATCC 27343 / NCTC 10154)).